The sequence spans 419 residues: Transcriptional regulator Myc-A (419 aa).

A 9aaTAD motif is present at residues E78–G86. Disordered stretches follow at residues A141 to L166, S206 to P274, and N319 to E344. The span at E226 to D245 shows a compositional bias: acidic residues. The span at T248 to S261 shows a compositional bias: basic and acidic residues. Residues N319 to S328 are compositionally biased toward polar residues. Residues D335 to L387 enclose the bHLH domain. Positions L387–L415 are leucine-zipper.

Efficient DNA binding requires dimerization with another bHLH protein. Binds DNA as a heterodimer with MAX.

Its subcellular location is the nucleus. Functionally, transcription factor that binds DNA in a non-specific manner, yet also specifically recognizes the core sequence 5'-CAC[GA]TG-3'. Activates the transcription of growth-related genes. The polypeptide is Transcriptional regulator Myc-A (myc-a) (Xenopus laevis (African clawed frog)).